We begin with the raw amino-acid sequence, 378 residues long: Protein KlaB (378 aa).

The protein belongs to the TelA family.

Its function is as follows. Belongs to the kla operon, which is associated with cryptic tellurite resistance, and IncW plasmid fertility inhibition. This Escherichia coli protein is Protein KlaB (klaB).